A 340-amino-acid chain; its full sequence is Glycerol-3-phosphate dehydrogenase [NAD(P)+] (340 aa).

Residues Ser15, Tyr16, His36, and Lys110 each coordinate NADPH. Sn-glycerol 3-phosphate is bound by residues Lys110, Gly139, and Thr141. Ala143 lines the NADPH pocket. 5 residues coordinate sn-glycerol 3-phosphate: Lys195, Asp248, Ser258, Arg259, and Asn260. Lys195 functions as the Proton acceptor in the catalytic mechanism. NADPH is bound at residue Arg259. NADPH contacts are provided by Val283 and Glu285.

This sequence belongs to the NAD-dependent glycerol-3-phosphate dehydrogenase family.

Its subcellular location is the cytoplasm. It carries out the reaction sn-glycerol 3-phosphate + NAD(+) = dihydroxyacetone phosphate + NADH + H(+). The enzyme catalyses sn-glycerol 3-phosphate + NADP(+) = dihydroxyacetone phosphate + NADPH + H(+). It participates in membrane lipid metabolism; glycerophospholipid metabolism. Functionally, catalyzes the reduction of the glycolytic intermediate dihydroxyacetone phosphate (DHAP) to sn-glycerol 3-phosphate (G3P), the key precursor for phospholipid synthesis. The chain is Glycerol-3-phosphate dehydrogenase [NAD(P)+] from Baumannia cicadellinicola subsp. Homalodisca coagulata.